A 178-amino-acid chain; its full sequence is Nicotinamide-nucleotide adenylyltransferase (178 aa).

Belongs to the archaeal NMN adenylyltransferase family. Homohexamer.

The protein localises to the cytoplasm. The catalysed reaction is beta-nicotinamide D-ribonucleotide + ATP + H(+) = diphosphate + NAD(+). It participates in cofactor biosynthesis; NAD(+) biosynthesis; NAD(+) from nicotinamide D-ribonucleotide: step 1/1. This is Nicotinamide-nucleotide adenylyltransferase from Methanothermobacter thermautotrophicus (strain ATCC 29096 / DSM 1053 / JCM 10044 / NBRC 100330 / Delta H) (Methanobacterium thermoautotrophicum).